The sequence spans 1016 residues: Enhancer of polycomb-like protein 1 (1016 aa).

5 disordered regions span residues 1-50 (MAIH…NDLE), 96-119 (LLGS…DASV), 450-488 (KEED…TIGT), 499-518 (GQVH…VKLP), and 842-1016 (ARMR…PNRK). The segment covering 35-50 (YKQSDLPTLNASNDLE) has biased composition (polar residues). Composition is skewed to basic and acidic residues over residues 103–116 (DGDK…KKTD) and 457–473 (ESSK…DSSR). Residues 475–488 (GSATSMPGSATIGT) show a composition bias toward polar residues. Positions 842 to 883 (ARMRTLQQQQRNNKQQAAGQSSGSSSASLGSNTNSNSSISGQ) are enriched in low complexity. Residues 884 to 902 (ADQGQTNLTNSGITRQGGA) are compositionally biased toward polar residues. A compositionally biased stretch (low complexity) spans 904–923 (VNGSQTSTTNNTRSSVSGGS). Residues 928-956 (LPTQSSQRSNTNSPLLASQPQGYSQQQKF) are compositionally biased toward polar residues. Positions 960–971 (PPTSQSQSQSPT) are enriched in low complexity. Polar residues predominate over residues 976–994 (QLQTSKMYNKHGSNITPSN).

Belongs to the enhancer of polycomb family. In terms of assembly, component of the NuA4 histone acetyltransferase complex.

The protein localises to the nucleus. Functionally, component of the NuA4 histone acetyltransferase complex which is involved in transcriptional activation of selected genes principally by acetylation of nucleosomal histone H4 and H2A. The NuA4 complex is also involved in DNA repair. Involved in gene silencing by neighboring heterochromatin, blockage of the silencing spreading along the chromosome, and required for cell cycle progression through G2/M. The polypeptide is Enhancer of polycomb-like protein 1 (EPL1) (Debaryomyces hansenii (strain ATCC 36239 / CBS 767 / BCRC 21394 / JCM 1990 / NBRC 0083 / IGC 2968) (Yeast)).